A 312-amino-acid chain; its full sequence is D-alanine--D-alanine ligase (312 aa).

One can recognise an ATP-grasp domain in the interval 108–308 (KLVWQQTGIP…YSELVVKVLS (201 aa)). An ATP-binding site is contributed by 138–193 (AAKLGVPLFVKPASEGSSVAVEKVKSADALPAALEEAAKHDKIVIVEKSIEGGGEY). Aspartate 262, glutamate 275, and asparagine 277 together coordinate Mg(2+).

Belongs to the D-alanine--D-alanine ligase family. Mg(2+) serves as cofactor. Mn(2+) is required as a cofactor.

It is found in the cytoplasm. It catalyses the reaction 2 D-alanine + ATP = D-alanyl-D-alanine + ADP + phosphate + H(+). It functions in the pathway cell wall biogenesis; peptidoglycan biosynthesis. Functionally, cell wall formation. In Burkholderia pseudomallei (strain 668), this protein is D-alanine--D-alanine ligase.